The sequence spans 67 residues: Toxin Bl-1 (67 aa).

Residues 2–66 (RDGYISQPEN…GIIVDGIKCH (65 aa)) enclose the LCN-type CS-alpha/beta domain. 4 disulfides stabilise this stretch: C12–C65, C16–C37, C23–C47, and C27–C49. A Threonine amide modification is found at T67.

It belongs to the long (4 C-C) scorpion toxin superfamily. Sodium channel inhibitor family. Alpha subfamily. Expressed by the venom gland.

The protein localises to the secreted. In terms of biological role, alpha toxins bind voltage-independently at site-3 of sodium channels (Nav) and inhibit the inactivation of the activated channels, thereby blocking neuronal transmission. Is highly toxic to insects (tested on the crickets A.domesticus). This peptide may also be toxic to mammals, since it is similar to alpha-like toxins that are active on both insect and mammalian sodium channels. In Buthacus leptochelys (Egyptian fat-tailed scorpion), this protein is Toxin Bl-1.